We begin with the raw amino-acid sequence, 187 residues long: UPF0301 protein CKO_04323 (187 aa).

It belongs to the UPF0301 (AlgH) family.

This is UPF0301 protein CKO_04323 from Citrobacter koseri (strain ATCC BAA-895 / CDC 4225-83 / SGSC4696).